Reading from the N-terminus, the 175-residue chain is Large ribosomal subunit protein uL15 (175 aa).

Disordered stretches follow at residues 1–65 (MSTL…LPKF) and 155–175 (PESA…QPKA). The span at 12 to 21 (RSWHRKKRVG) shows a compositional bias: basic residues. Positions 22–38 (RGQGSGLGKTAGRGGKG) are enriched in gly residues. Low complexity predominate over residues 160–169 (KAHAGKGVKA).

This sequence belongs to the universal ribosomal protein uL15 family. In terms of assembly, part of the 50S ribosomal subunit.

Binds to the 23S rRNA. This is Large ribosomal subunit protein uL15 from Myxococcus xanthus (strain DK1622).